We begin with the raw amino-acid sequence, 260 residues long: Chloride intracellular channel Clic (260 aa).

Residues 42–66 traverse the membrane as a helical segment; sequence FCQEYFMDLYLLAELKTISLKVTTV.

This sequence belongs to the chloride channel CLIC family. In terms of tissue distribution, expressed in cardiac tubes.

Its subcellular location is the mitochondrion. It localises to the membrane. Its function is as follows. Might insert into membranes and form chloride ion channels. Channel activity depends on the pH. May play a role in ethanol sensitivity. This chain is Chloride intracellular channel Clic, found in Drosophila melanogaster (Fruit fly).